Reading from the N-terminus, the 449-residue chain is Tripartite motif-containing protein 64 (449 aa).

The segment at 15–56 (CCICVNYFIDPVTIDCGHSFCRPCLCLCSEEGRAPMRCPSCR) adopts an RING-type zinc-finger fold. The B box-type zinc-finger motif lies at 87 to 128 (SSDNICVLHEETKELFCEADKRLLCGPCSESPEHMAHSHSPI). Residues C92, H95, C114, and H120 each coordinate Zn(2+). A coiled-coil region spans residues 189–225 (LDEEEQRHLQALEREAEELFQQLQDSQVRMTQHLERM). Residues 269–449 (LTSWCITGVL…LRPFFCFGCT (181 aa)) enclose the B30.2/SPRY domain.

Belongs to the TRIM/RBCC family.

In Homo sapiens (Human), this protein is Tripartite motif-containing protein 64 (TRIM64).